We begin with the raw amino-acid sequence, 543 residues long: Bifunctional riboflavin biosynthesis protein RIBA 1, chloroplastic (543 aa).

Residues 1–56 constitute a chloroplast transit peptide; sequence MSSINLSSSSPSTISLSRSRLSQSSTTLLHGLHRVTLPSNHPLSTFSIKTNTGKVK. The tract at residues 57–328 is DHBP synthase; the sequence is AAVISREDDL…IADLIRYRRK (272 aa). D-ribulose 5-phosphate is bound by residues 152–153, D157, 267–271, and E291; these read RE and RAGHT. E153 contacts Mg(2+). H270 contacts Mg(2+). Residues 329-543 are GTP cyclohydrolase II; the sequence is RDKLVERASA…VEKIESESES (215 aa). A GTP-binding site is contributed by 379 to 383; the sequence is RVHSE. Zn(2+) contacts are provided by C384, C395, and C397. Residues Q400, 423–425, and T445 each bind GTP; that span reads EGR. The active-site Proton acceptor; for GTP cyclohydrolase activity is the D457. Residue R459 is the Nucleophile; for GTP cyclohydrolase activity of the active site. GTP contacts are provided by T480 and K485.

This sequence in the N-terminal section; belongs to the DHBP synthase family. It in the C-terminal section; belongs to the GTP cyclohydrolase II family. Requires Mg(2+) as cofactor. Mn(2+) is required as a cofactor. Zn(2+) serves as cofactor. Expressed in leaves, shoots, roots, flowers and siliques.

The protein localises to the plastid. The protein resides in the chloroplast. The catalysed reaction is D-ribulose 5-phosphate = (2S)-2-hydroxy-3-oxobutyl phosphate + formate + H(+). It carries out the reaction GTP + 4 H2O = 2,5-diamino-6-hydroxy-4-(5-phosphoribosylamino)-pyrimidine + formate + 2 phosphate + 3 H(+). The protein operates within cofactor biosynthesis; riboflavin biosynthesis; 2-hydroxy-3-oxobutyl phosphate from D-ribulose 5-phosphate: step 1/1. It participates in cofactor biosynthesis; riboflavin biosynthesis; 5-amino-6-(D-ribitylamino)uracil from GTP: step 1/4. In terms of biological role, involved in riboflavin biosynthesis. Catalyzes both the conversion of D-ribulose 5-phosphate to formate and 3,4-dihydroxy-2-butanone 4-phosphate and the conversion of GTP to 2,5-diamino-6-ribosylamino-4(3H)-pyrimidinone 5'-phosphate (DARP), formate and pyrophosphate. RIBA2 and RIBA3 together are not able to complement the loss of function of RIBA1. The chain is Bifunctional riboflavin biosynthesis protein RIBA 1, chloroplastic (RIBA1) from Arabidopsis thaliana (Mouse-ear cress).